A 162-amino-acid chain; its full sequence is Transcription elongation factor GreA (162 aa).

Positions 45–75 form a coiled coil; the sequence is ENAEYEAAREKQAFIEGRIKELEDMAARAEI.

The protein belongs to the GreA/GreB family.

In terms of biological role, necessary for efficient RNA polymerase transcription elongation past template-encoded arresting sites. The arresting sites in DNA have the property of trapping a certain fraction of elongating RNA polymerases that pass through, resulting in locked ternary complexes. Cleavage of the nascent transcript by cleavage factors such as GreA or GreB allows the resumption of elongation from the new 3'terminus. GreA releases sequences of 2 to 3 nucleotides. This Rickettsia canadensis (strain McKiel) protein is Transcription elongation factor GreA.